The following is a 285-amino-acid chain: Protease HtpX homolog (285 aa).

Transmembrane regions (helical) follow at residues 7–27 (TAML…MIGG) and 30–50 (GMTI…WFSD). Residue His-131 coordinates Zn(2+). Glu-132 is an active-site residue. Residue His-135 participates in Zn(2+) binding. The next 2 membrane-spanning stretches (helical) occupy residues 146-166 (ITAT…FFGG) and 177-197 (IAGI…QMAI). Residue Glu-202 participates in Zn(2+) binding.

This sequence belongs to the peptidase M48B family. The cofactor is Zn(2+).

It is found in the cell inner membrane. The sequence is that of Protease HtpX homolog from Burkholderia ambifaria (strain MC40-6).